The primary structure comprises 144 residues: Protein D (144 aa).

This Escherichia coli protein is Protein D (D).